Reading from the N-terminus, the 145-residue chain is Protein H2A.5 (145 aa).

A disordered region spans residues 118–145 (SPAAAEKEAKSQKAAAKSPKKKTAATKE). Residues 135–138 (SPKK) carry the SPKK motif motif. Over residues 135 to 145 (SPKKKTAATKE) the composition is skewed to basic residues.

This sequence belongs to the histone H2A family. The nucleosome is a histone octamer containing two molecules each of H2A, H2B, H3 and H4 assembled in one H3-H4 heterotetramer and two H2A-H2B heterodimers. The octamer wraps approximately 147 bp of DNA. In terms of tissue distribution, abundant in meristematic tissues.

Its subcellular location is the nucleus. The protein localises to the chromosome. Core component of nucleosome. Nucleosomes wrap and compact DNA into chromatin, limiting DNA accessibility to the cellular machineries which require DNA as a template. Histones thereby play a central role in transcription regulation, DNA repair, DNA replication and chromosomal stability. DNA accessibility is regulated via a complex set of post-translational modifications of histones, also called histone code, and nucleosome remodeling. This Triticum aestivum (Wheat) protein is Protein H2A.5 (H2A-2).